The chain runs to 232 residues: Thiamine import ATP-binding protein ThiQ (232 aa).

Residues 2 to 230 form the ABC transporter domain; sequence LKLTDITWLY…KASASAILGI (229 aa). 32-39 lines the ATP pocket; the sequence is GPSGAGKS.

Belongs to the ABC transporter superfamily. Thiamine importer (TC 3.A.1.19.1) family. As to quaternary structure, the complex is composed of two ATP-binding proteins (ThiQ), two transmembrane proteins (ThiP) and a solute-binding protein (ThiB).

The protein localises to the cell inner membrane. It catalyses the reaction thiamine(out) + ATP + H2O = thiamine(in) + ADP + phosphate + H(+). Its function is as follows. Part of the ABC transporter complex ThiBPQ involved in thiamine import. Responsible for energy coupling to the transport system. In Shigella flexneri serotype 5b (strain 8401), this protein is Thiamine import ATP-binding protein ThiQ.